Reading from the N-terminus, the 526-residue chain is MAKEIDINKLLAQENNALNTILSQVNELCEQNKKLQGLIEIQNETKELEKEHNRSLPWFKRLVKTVSNVKYIFVKSEEQLTNEAIKYNNKILKDIDNKIYNIAEKSAPLKQELQEEIEKNFKDLTKKDLSKEQRERLSEVYFSYKSKPERFSALNMTNPLQFIKAEELEKQYNSLNATKQNIQNLISENSNIKELKEIQKQVAEIREEIPYTFFEKLNNIWQNVKNVFVNNSEQVLAKNKESNTRAIRKIDEQLYKTKHKFEELIENKERNINDIIAKLPDNEELQKIVSNLANHMTSKKEPILTTSSIAKPLENNVTPPPPLTKNNIPPPPPPPPLSKNNILPPPPPPMPTMAPAQTETLSKPVGVTTTVKKLENQPRPSIDTSDLMREIAGPKNLRKVEKTDVKTQDSRDLLLQSIRGEHKLRKVEFDPNTGKPVAHSHSKPAQNVSKPNGVASILARRVAMEMSDSSSSSGSESDSGNWSDASVNSNKPKALKTRGERDAKTTTHAQKILSNRSSQKPSFVRS.

The disordered stretch occupies residues 305–356; sequence TTSSIAKPLENNVTPPPPLTKNNIPPPPPPPPLSKNNILPPPPPPMPTMAPA. Residues 318-352 show a composition bias toward pro residues; that stretch reads TPPPPLTKNNIPPPPPPPPLSKNNILPPPPPPMPT. WH2 domains lie at 383–400 and 410–427; these read DTSD…LRKV and SRDL…LRKV. Disordered regions lie at residues 425 to 452 and 464 to 526; these read RKVE…SKPN and MEMS…FVRS. Residues 448–484 are central and acidic domains; the sequence is VSKPNGVASILARRVAMEMSDSSSSSGSESDSGNWSD. Residues 464–480 show a composition bias toward low complexity; it reads MEMSDSSSSSGSESDSG. 2 stretches are compositionally biased toward polar residues: residues 481–491 and 506–526; these read NWSDASVNSNK and TTHA…FVRS.

In terms of assembly, homodimer.

The protein resides in the cell surface. Its function is as follows. Recruits and activates the Arp2/3 complex, which in turn leads to actin polymerization, promoting Rickettsia motility during infection. In Rickettsia felis (strain ATCC VR-1525 / URRWXCal2) (Rickettsia azadi), this protein is Arp2/3 complex-activating protein rickA (rickA).